Reading from the N-terminus, the 302-residue chain is Putative S-adenosyl-L-methionine-dependent methyltransferase MAV_2803 (302 aa).

S-adenosyl-L-methionine-binding positions include Asp129 and 158 to 159 (DL).

Belongs to the UPF0677 family.

In terms of biological role, exhibits S-adenosyl-L-methionine-dependent methyltransferase activity. The polypeptide is Putative S-adenosyl-L-methionine-dependent methyltransferase MAV_2803 (Mycobacterium avium (strain 104)).